We begin with the raw amino-acid sequence, 727 residues long: Cyclin-T1 (727 aa).

Phosphoserine is present on Ser117. The Nuclear localization signal signature appears at 253-270 (KRIWNWRAWQADRKTKAD). Lys343 participates in a covalent cross-link: Glycyl lysine isopeptide (Lys-Gly) (interchain with G-Cter in SUMO2). Ser389 carries the phosphoserine modification. Positions 389 to 420 (SLKEYRAKHAEELAAQKRQLENMEANVKSQYA) form a coiled coil. At Lys391 the chain carries N6-acetyllysine. Lys416 is covalently cross-linked (Glycyl lysine isopeptide (Lys-Gly) (interchain with G-Cter in SUMO2)). ADP-ribosylserine is present on residues Ser417 and Ser475. The histidine-rich domain (HRD) stretch occupies residues 481–551 (IKMRIKVHTA…RLGDPKHSSQ (71 aa)). Lys482 participates in a covalent cross-link: Glycyl lysine isopeptide (Lys-Gly) (interchain with G-Cter in SUMO2). Position 486 is an N6-(ADP-ribosyl)lysine (Lys486). Positions 487 to 507 (VHTAADKHNSVDDSVTKNREH) are enriched in basic and acidic residues. Disordered stretches follow at residues 487 to 631 (VHTA…QPSC) and 691 to 727 (YMNP…PLPK). His488 is subject to ADP-ribosylhistidine. Phosphoserine occurs at positions 496 and 500. Over residues 508 to 531 (KEKHKTHPSNHHHHHNHHSHKHSH) the composition is skewed to basic residues. His531 is subject to ADP-ribosylhistidine. ADP-ribosylserine occurs at positions 532, 550, and 553. His557 bears the ADP-ribosylhistidine mark. Residues 561 to 571 (SLSSSFSSSSS) show a composition bias toward low complexity. Position 564 is an ADP-ribosylserine (Ser564). Ser565 carries the phosphoserine modification. The segment covering 616–631 (GHSSDTSGLHFSQPSC) has biased composition (polar residues). Pro residues predominate over residues 711–727 (PPPLPSEPPPPLPPLPK).

The protein belongs to the cyclin family. Cyclin C subfamily. In terms of assembly, cyclin-T1 is the predominant cyclin that associates with CDK9 to form a heterodimer called P-TEFb. P-TEFb forms a complex with AFF4/AF5Q31. Component of a complex which is at least composed of HTATSF1/Tat-SF1, P-TEFb complex, RNA pol II, SUPT5H, and NCL/nucleolin. Component of the 7SK snRNP complex at least composed of P-TEFb (composed of CDK9 and CCNT1/cyclin-T1), HEXIM1, HEXIM2, BCDIN3, SART3 proteins and 7SK and U6 snRNAs. Interacts (via central region) with ZMYND8 (via N-terminus); the interaction is direct and the association appears to occur between homodimeric ZMYND8 and the activated form of the P-TEFb complex. Interacts with BRD4, targets chromatin binding. Interacts with JMJD6. Interacts with MDFIC. Interacts with HSF1. Interacts with HTATSF1. Interacts with TBX21. (Microbial infection) Binds to BIV Tat, however Tat binds TAR RNA in a Cyc-T1-independent mode. Post-translationally, ADP-ribosylation on serine residues by PARP1 in response to DNA damage disrupts the phase separation activity of CCNT1, thereby preventing activation of CDK9.

Its subcellular location is the nucleus. Regulatory subunit of the cyclin-dependent kinase pair (CDK9/cyclin-T1) complex, also called positive transcription elongation factor B (P-TEFb), which facilitates the transition from abortive to productive elongation by phosphorylating the CTD (C-terminal domain) of the large subunit of RNA polymerase II (RNA Pol II). Required to activate the protein kinase activity of CDK9: acts by mediating formation of liquid-liquid phase separation (LLPS) that enhances binding of P-TEFb to the CTD of RNA Pol II. The protein is Cyclin-T1 (CCNT1) of Bos taurus (Bovine).